The following is a 128-amino-acid chain: 14 kDa zinc-binding protein (128 aa).

The HIT domain maps to 18-128 (IFDKIIKKEI…GGRQMNWPPG (111 aa)). Positions 112 to 116 (HIHVH) match the Histidine triad motif motif.

In terms of assembly, homodimer.

This is 14 kDa zinc-binding protein (ZBP14) from Zea mays (Maize).